The chain runs to 127 residues: Aspartate 1-decarboxylase (127 aa).

Catalysis depends on serine 25, which acts as the Schiff-base intermediate with substrate; via pyruvic acid. Serine 25 bears the Pyruvic acid (Ser) mark. Threonine 57 provides a ligand contact to substrate. The Proton donor role is filled by tyrosine 58. A substrate-binding site is contributed by 73 to 75; it reads GAA.

Belongs to the PanD family. As to quaternary structure, heterooctamer of four alpha and four beta subunits. It depends on pyruvate as a cofactor. Post-translationally, is synthesized initially as an inactive proenzyme, which is activated by self-cleavage at a specific serine bond to produce a beta-subunit with a hydroxyl group at its C-terminus and an alpha-subunit with a pyruvoyl group at its N-terminus.

It is found in the cytoplasm. It carries out the reaction L-aspartate + H(+) = beta-alanine + CO2. It functions in the pathway cofactor biosynthesis; (R)-pantothenate biosynthesis; beta-alanine from L-aspartate: step 1/1. In terms of biological role, catalyzes the pyruvoyl-dependent decarboxylation of aspartate to produce beta-alanine. The polypeptide is Aspartate 1-decarboxylase (Staphylococcus aureus (strain bovine RF122 / ET3-1)).